A 440-amino-acid polypeptide reads, in one-letter code: Gap junction alpha-8 protein (440 aa).

An intramembrane segment occupies 2-12; that stretch reads GDWSFLGNILE. Residues 13–21 lie on the Cytoplasmic side of the membrane; sequence EVNEHSTVI. The helical transmembrane segment at 22–42 threads the bilayer; that stretch reads GRVWLTVLFIFRILILGTAAE. Residues 43–71 are Extracellular-facing; that stretch reads FVWGDEQSDFVCNTQQPGCENVCYDEAFP. Disulfide bonds link Cys54–Cys201, Cys61–Cys195, and Cys65–Cys190. Residues 72–92 form a helical membrane-spanning segment; that stretch reads ISHIRLWVLQIIFVSTPSLMY. At 93–161 the chain is on the cytoplasmic side; that stretch reads VGHAVHHVRM…GTLLRTYVCH (69 aa). Residues 111 to 143 form a disordered region; the sequence is AEELCQQSRSNGGERVPIAPDQASIRKSSSSSK. Residues 162–182 form a helical membrane-spanning segment; sequence IIFKTLFEVGFIVGHYFLYGF. Topologically, residues 183–210 are extracellular; the sequence is RILPLYRCSRWPCPNVVDCFVSRPTEKT. The chain crosses the membrane as a helical span at residues 211–231; the sequence is IFILFMLSVAFVSLFLNIMEM. At 232-440 the chain is on the cytoplasmic side; sequence SHLGMKGIRS…SRARSDDLTI (209 aa). Residues 338–440 form a disordered region; it reads VEREEPPIEE…SRARSDDLTI (103 aa). Basic and acidic residues-rich tracts occupy residues 353 to 364 and 374 to 399; these read VGEKKQEAEKVA and PDRE…EKVT. Residues 423–432 are compositionally biased toward low complexity; the sequence is LSRLSKASSR.

It belongs to the connexin family. Alpha-type (group II) subfamily. In terms of assembly, a hemichannel or connexon is composed of a hexamer of connexins. A functional gap junction is formed by the apposition of two hemichannels. Forms heteromeric channels with GJA3. As to expression, detected in eye lens (at protein level). Eye lens.

The protein localises to the cell membrane. The protein resides in the cell junction. It localises to the gap junction. Functionally, structural component of eye lens gap junctions. Gap junctions are dodecameric channels that connect the cytoplasm of adjoining cells. They are formed by the docking of two hexameric hemichannels, one from each cell membrane. Small molecules and ions diffuse from one cell to a neighboring cell via the central pore. The chain is Gap junction alpha-8 protein (Gja8) from Mus musculus (Mouse).